We begin with the raw amino-acid sequence, 139 residues long: Large ribosomal subunit protein uL14A (139 aa).

This sequence belongs to the universal ribosomal protein uL14 family. In terms of assembly, component of the large ribosomal subunit (LSU). Mature yeast ribosomes consist of a small (40S) and a large (60S) subunit. The 40S small subunit contains 1 molecule of ribosomal RNA (18S rRNA) and at least 33 different proteins. The large 60S subunit contains 3 rRNA molecules (25S, 5.8S and 5S rRNA) and at least 46 different proteins.

It is found in the cytoplasm. Its subcellular location is the nucleus. Component of the ribosome, a large ribonucleoprotein complex responsible for the synthesis of proteins in the cell. The small ribosomal subunit (SSU) binds messenger RNAs (mRNAs) and translates the encoded message by selecting cognate aminoacyl-transfer RNA (tRNA) molecules. The large subunit (LSU) contains the ribosomal catalytic site termed the peptidyl transferase center (PTC), which catalyzes the formation of peptide bonds, thereby polymerizing the amino acids delivered by tRNAs into a polypeptide chain. The nascent polypeptides leave the ribosome through a tunnel in the LSU and interact with protein factors that function in enzymatic processing, targeting, and the membrane insertion of nascent chains at the exit of the ribosomal tunnel. This is Large ribosomal subunit protein uL14A (rpl2301) from Schizosaccharomyces pombe (strain 972 / ATCC 24843) (Fission yeast).